The chain runs to 98 residues: NADH-ubiquinone oxidoreductase chain 4L (98 aa).

A run of 3 helical transmembrane segments spans residues 1–21 (MSLAHINIFLAFTVSLVGLLM), 25–45 (HLMSSLLCLEGMMLSLFVMAT), and 59–81 (MPIILLVFAACERALGLSLLVMV).

It belongs to the complex I subunit 4L family. As to quaternary structure, core subunit of respiratory chain NADH dehydrogenase (Complex I) which is composed of 45 different subunits.

It localises to the mitochondrion inner membrane. It catalyses the reaction a ubiquinone + NADH + 5 H(+)(in) = a ubiquinol + NAD(+) + 4 H(+)(out). Functionally, core subunit of the mitochondrial membrane respiratory chain NADH dehydrogenase (Complex I) which catalyzes electron transfer from NADH through the respiratory chain, using ubiquinone as an electron acceptor. Part of the enzyme membrane arm which is embedded in the lipid bilayer and involved in proton translocation. The sequence is that of NADH-ubiquinone oxidoreductase chain 4L (MT-ND4L) from Equus asinus (Donkey).